A 247-amino-acid polypeptide reads, in one-letter code: Carboxy-S-adenosyl-L-methionine synthase (247 aa).

S-adenosyl-L-methionine contacts are provided by residues Y39, G64–S66, D89–N90, D117–I118, N132, and R199.

Belongs to the class I-like SAM-binding methyltransferase superfamily. Cx-SAM synthase family. In terms of assembly, homodimer.

The enzyme catalyses prephenate + S-adenosyl-L-methionine = carboxy-S-adenosyl-L-methionine + 3-phenylpyruvate + H2O. Catalyzes the conversion of S-adenosyl-L-methionine (SAM) to carboxy-S-adenosyl-L-methionine (Cx-SAM). The chain is Carboxy-S-adenosyl-L-methionine synthase from Salmonella agona (strain SL483).